A 329-amino-acid chain; its full sequence is MQGSVTEFLKPRLVDIEQISSTHAKVILEPLERGFGHTLGNALRRILLSSMPGYAVTEVEIDGVLHEYSSKEGVQEDIIEVLLNLKGLAVKVQNKDNVFLTLSKSGIGPVVAADITHDGDVEIVNPDHVICHLTDENASINMRIRVQRGRGYVPASSRVHSLDEERPIGRLLVDACYSPVDRIAYNVQAARVEQRTDLDKLVIELETNGTIEPEEAIRRAATILAEQLDAFVDLRDVRQPEVKEEKPEFDPILLRPVDDLELTVRSANCLKAETIHYIGDLVQRTEVELLKTPNLGKKSLTEIKDVLVSRGLSLGMRLENWPPASIAED.

The segment at 1 to 235 is alpha N-terminal domain (alpha-NTD); it reads MQGSVTEFLK…EQLDAFVDLR (235 aa). The segment at 249 to 329 is alpha C-terminal domain (alpha-CTD); sequence FDPILLRPVD…NWPPASIAED (81 aa).

Belongs to the RNA polymerase alpha chain family. Homodimer. The RNAP catalytic core consists of 2 alpha, 1 beta, 1 beta' and 1 omega subunit. When a sigma factor is associated with the core the holoenzyme is formed, which can initiate transcription.

It carries out the reaction RNA(n) + a ribonucleoside 5'-triphosphate = RNA(n+1) + diphosphate. Functionally, DNA-dependent RNA polymerase catalyzes the transcription of DNA into RNA using the four ribonucleoside triphosphates as substrates. In Histophilus somni (strain 129Pt) (Haemophilus somnus), this protein is DNA-directed RNA polymerase subunit alpha.